Here is a 47-residue protein sequence, read N- to C-terminus: Small, acid-soluble spore protein N (47 aa).

Residues 1 to 12 (MSNPKGSRKHFV) show a composition bias toward basic residues. The tract at residues 1-47 (MSNPKGSRKHFVPNHIGTQPRAAGGNKGKQMQDQSGQHAQVIQTKGE) is disordered. Residues 29–47 (KQMQDQSGQHAQVIQTKGE) are compositionally biased toward polar residues.

Belongs to the SspN family.

It localises to the spore core. The chain is Small, acid-soluble spore protein N from Geobacillus kaustophilus (strain HTA426).